The following is a 474-amino-acid chain: Microtubule protein alp7 (474 aa).

Residues 1–20 (MSDIVSSSTDYSRRSPSSSS) are compositionally biased toward low complexity. Disordered regions lie at residues 1–79 (MSDI…DTLN), 93–114 (KSFDFSGTPRPMHPISHPLSQH), and 164–223 (SLQT…NSTQ). Serine 17 carries the post-translational modification Phosphoserine. Residues 25-36 (ETDHTGFHEKRQ) show a composition bias toward basic and acidic residues. The segment covering 66–76 (SKPNPQLNLKD) has biased composition (polar residues). Composition is skewed to polar residues over residues 177–189 (SNGSFPRQTNTAP) and 201–223 (RNSATPSTSQADIPTQYPINSTQ). 2 coiled-coil regions span residues 219-273 (INST…QLRS) and 367-471 (KISN…LNLE).

As to quaternary structure, interacts with alp14.

It localises to the nucleus. The protein resides in the cytoplasm. It is found in the cytoskeleton. The protein localises to the spindle. Its subcellular location is the chromosome. It localises to the centromere. The protein resides in the kinetochore. Required for bipolar spindle formation and proper chromosome segregation. Has an indirect role in connecting the kinetochores and the plus end of pole to chromosome microtubules by targeting alp14 to the spindle pole body. Involved in the emergence of large microtubule organizing centers (MTOC) in interphase cells. Attaches to the minus ends of microtubules and associates with the sites of microtubule attachment on the nuclear envelope. This leads to the stabilization of the microtubule bundles. This Schizosaccharomyces pombe (strain 972 / ATCC 24843) (Fission yeast) protein is Microtubule protein alp7 (alp7).